The primary structure comprises 432 residues: Interleukin-11 receptor subunit alpha-2 (432 aa).

The N-terminal stretch at 1–23 (MSSSCSGLTRVLVAVATALVSSS) is a signal peptide. Topologically, residues 24 to 372 (SPCPQAWGPP…DPLEQVAVLA (349 aa)) are extracellular. In terms of domain architecture, Ig-like C2-type spans 27–110 (PQAWGPPGVQ…SGGMVTLKLG (84 aa)). 3 disulfide bridges follow: Cys-48–Cys-94, Cys-120–Cys-130, and Cys-170–Cys-180. Fibronectin type-III domains are found at residues 112–219 (PPAR…LRPD) and 220–317 (PPQG…TPST). N-linked (GlcNAc...) asparagine glycosylation is present at Asn-127. The disordered stretch occupies residues 151 to 170 (KTLPGAESQRESPSTGPWPC). The N-linked (GlcNAc...) asparagine glycan is linked to Asn-194. Positions 304 to 308 (WSAWS) match the WSXWS motif motif. Residues 373–393 (SLGIFSCLGLAVGALALGLWL) traverse the membrane as a helical segment. Topologically, residues 394 to 432 (RLRRSGKEGPQKPGLLAPMIPVEKLPGIPNLQRTPENFS) are cytoplasmic.

It belongs to the type I cytokine receptor family. Type 3 subfamily. On ligand binding, forms a multimer complex with IL6ST/gp130. In terms of tissue distribution, expression restricted to testis, lymph node and thymus. Highest level in testis.

It is found in the membrane. Functionally, receptor for interleukin-11. The receptor systems for IL6, LIF, OSM, CNTF, IL11 and CT1 can utilize IL6ST for initiating signal transmission. The IL11/IL11RA/IL6ST complex may be involved in the control of proliferation and/or differentiation of skeletogenic progenitor or other mesenchymal cells. The chain is Interleukin-11 receptor subunit alpha-2 (Il11ra2) from Mus musculus (Mouse).